The chain runs to 359 residues: Heme A synthase (359 aa).

Helical transmembrane passes span 8–28 (IMSI…VVGG), 94–114 (LLGR…YYLK), 124–144 (LLLI…MVKS), 159–179 (GHLL…LIII), and 215–235 (IIIF…GLDA). His-274 contacts heme. Transmembrane regions (helical) follow at residues 276–296 (WFGI…IILN), 303–323 (MGMV…ITLV), and 328–348 (ILAA…FLFI). His-334 is a binding site for heme.

It belongs to the COX15/CtaA family. Type 2 subfamily. Interacts with CtaB. It depends on heme b as a cofactor.

It localises to the cell membrane. The enzyme catalyses Fe(II)-heme o + 2 A + H2O = Fe(II)-heme a + 2 AH2. The protein operates within porphyrin-containing compound metabolism; heme A biosynthesis; heme A from heme O: step 1/1. In terms of biological role, catalyzes the conversion of heme O to heme A by two successive hydroxylations of the methyl group at C8. The first hydroxylation forms heme I, the second hydroxylation results in an unstable dihydroxymethyl group, which spontaneously dehydrates, resulting in the formyl group of heme A. The chain is Heme A synthase from Orientia tsutsugamushi (strain Ikeda) (Rickettsia tsutsugamushi).